A 264-amino-acid polypeptide reads, in one-letter code: Thiazole synthase (264 aa).

Lysine 106 serves as the catalytic Schiff-base intermediate with DXP. 1-deoxy-D-xylulose 5-phosphate is bound by residues glycine 167, 193–194 (AG), and 215–216 (NT).

Belongs to the ThiG family. In terms of assembly, homotetramer. Forms heterodimers with either ThiH or ThiS.

Its subcellular location is the cytoplasm. It carries out the reaction [ThiS sulfur-carrier protein]-C-terminal-Gly-aminoethanethioate + 2-iminoacetate + 1-deoxy-D-xylulose 5-phosphate = [ThiS sulfur-carrier protein]-C-terminal Gly-Gly + 2-[(2R,5Z)-2-carboxy-4-methylthiazol-5(2H)-ylidene]ethyl phosphate + 2 H2O + H(+). It participates in cofactor biosynthesis; thiamine diphosphate biosynthesis. Catalyzes the rearrangement of 1-deoxy-D-xylulose 5-phosphate (DXP) to produce the thiazole phosphate moiety of thiamine. Sulfur is provided by the thiocarboxylate moiety of the carrier protein ThiS. In vitro, sulfur can be provided by H(2)S. The protein is Thiazole synthase of Thioalkalivibrio sulfidiphilus (strain HL-EbGR7).